The primary structure comprises 67 residues: Beta-defensin 103A (67 aa).

The first 22 residues, 1-22 (MRIHFLLFALLFLFLMPVPGNG), serve as a signal peptide directing secretion. 3 cysteine pairs are disulfide-bonded: Cys-33/Cys-62, Cys-40/Cys-55, and Cys-45/Cys-63.

Belongs to the beta-defensin family.

The protein localises to the secreted. In terms of biological role, exhibits antimicrobial activity against Gram-positive and Gram-negative bacteria. The polypeptide is Beta-defensin 103A (DEFB103A) (Equus caballus (Horse)).